Consider the following 215-residue polypeptide: Mediator of RNA polymerase II transcription subunit 20 (215 aa).

The protein belongs to the Mediator complex subunit 20 family. As to quaternary structure, component of the Mediator complex.

It is found in the nucleus. Its function is as follows. Component of the Mediator complex, a coactivator involved in the regulated transcription of nearly all RNA polymerase II-dependent genes. Mediator functions as a bridge to convey information from gene-specific regulatory proteins to the basal RNA polymerase II transcription machinery. Mediator is recruited to promoters by direct interactions with regulatory proteins and serves as a scaffold for the assembly of a functional preinitiation complex with RNA polymerase II and the general transcription factors. In Candida glabrata (strain ATCC 2001 / BCRC 20586 / JCM 3761 / NBRC 0622 / NRRL Y-65 / CBS 138) (Yeast), this protein is Mediator of RNA polymerase II transcription subunit 20 (SRB2).